The sequence spans 686 residues: AsmA family protein YhjG (686 aa).

Topologically, residues 1-6 are cytoplasmic; it reads MSKAGK. The chain crosses the membrane as a helical span at residues 7 to 27; the sequence is ITAAISGAFLLLIVVAIILIA. The Periplasmic segment spans residues 28–686; the sequence is TFDWNRLKPT…CRTILSQMKK (659 aa). The tract at residues 372-396 is disordered; the sequence is VDSGKGAEKSKRSEQKKGEKSVQPA. Over residues 376 to 391 the composition is skewed to basic and acidic residues; the sequence is KGAEKSKRSEQKKGEK.

Belongs to the AsmA family.

The protein localises to the cell inner membrane. The polypeptide is AsmA family protein YhjG (yhjG) (Escherichia coli (strain K12)).